The chain runs to 243 residues: 1-(5-phosphoribosyl)-5-[(5-phosphoribosylamino)methylideneamino] imidazole-4-carboxamide isomerase (243 aa).

Asp-8 acts as the Proton acceptor in catalysis. Asp-130 (proton donor) is an active-site residue.

It belongs to the HisA/HisF family.

The protein resides in the cytoplasm. The catalysed reaction is 1-(5-phospho-beta-D-ribosyl)-5-[(5-phospho-beta-D-ribosylamino)methylideneamino]imidazole-4-carboxamide = 5-[(5-phospho-1-deoxy-D-ribulos-1-ylimino)methylamino]-1-(5-phospho-beta-D-ribosyl)imidazole-4-carboxamide. It functions in the pathway amino-acid biosynthesis; L-histidine biosynthesis; L-histidine from 5-phospho-alpha-D-ribose 1-diphosphate: step 4/9. The polypeptide is 1-(5-phosphoribosyl)-5-[(5-phosphoribosylamino)methylideneamino] imidazole-4-carboxamide isomerase (Acinetobacter baumannii (strain SDF)).